A 39-amino-acid polypeptide reads, in one-letter code: Cytochrome b6-f complex subunit 5 (39 aa).

Residues leucine 5–alanine 25 form a helical membrane-spanning segment.

It belongs to the PetG family. In terms of assembly, the 4 large subunits of the cytochrome b6-f complex are cytochrome b6, subunit IV (17 kDa polypeptide, PetD), cytochrome f and the Rieske protein, while the 4 small subunits are PetG, PetL, PetM and PetN. The complex functions as a dimer.

It is found in the cellular thylakoid membrane. In terms of biological role, component of the cytochrome b6-f complex, which mediates electron transfer between photosystem II (PSII) and photosystem I (PSI), cyclic electron flow around PSI, and state transitions. PetG is required for either the stability or assembly of the cytochrome b6-f complex. The chain is Cytochrome b6-f complex subunit 5 from Prochlorococcus marinus subsp. pastoris (strain CCMP1986 / NIES-2087 / MED4).